Consider the following 253-residue polypeptide: Probable transcriptional regulatory protein Synpcc7942_1017 (253 aa).

The protein belongs to the TACO1 family.

The protein localises to the cytoplasm. The sequence is that of Probable transcriptional regulatory protein Synpcc7942_1017 from Synechococcus elongatus (strain ATCC 33912 / PCC 7942 / FACHB-805) (Anacystis nidulans R2).